The sequence spans 291 residues: Ubiquinone biosynthesis protein COQ4, mitochondrial (291 aa).

A mitochondrion-targeting transit peptide spans 1–37 (MLGRRSVSLLRGLTELPVSSRAHTALRALSVPQTRRN). Positions 169, 170, 173, and 185 each coordinate Zn(2+). The segment covering 271–283 (PLNEAKEAAERRS) has biased composition (basic and acidic residues). The segment at 271–291 (PLNEAKEAAERRSKTTQNQIY) is disordered.

It belongs to the COQ4 family. Component of a multi-subunit COQ enzyme complex, composed of at least COQ3, COQ4, COQ5, COQ6, COQ7 and COQ9. It depends on Zn(2+) as a cofactor.

Its subcellular location is the mitochondrion inner membrane. It carries out the reaction a 4-hydroxy-3-methoxy-5-(all-trans-polyprenyl)benzoate + H(+) = a 2-methoxy-6-(all-trans-polyprenyl)phenol + CO2. Its pathway is cofactor biosynthesis; ubiquinone biosynthesis. In terms of biological role, lyase that catalyzes the C1-decarboxylation of 4-hydroxy-3-methoxy-5-(all-trans-polyprenyl)benzoic acid into 2-methoxy-6-(all-trans-polyprenyl)phenol during ubiquinone biosynthesis. The polypeptide is Ubiquinone biosynthesis protein COQ4, mitochondrial (Coprinopsis cinerea (strain Okayama-7 / 130 / ATCC MYA-4618 / FGSC 9003) (Inky cap fungus)).